A 327-amino-acid polypeptide reads, in one-letter code: Geranylgeranyl transferase type-2 subunit alpha (327 aa).

PFTA repeat units lie at residues 44–78 (YSIE…SLAS), 84–118 (FWDK…HYPT), 123–157 (VWQT…NIES), 163–197 (LDKE…RMFQ), and 207–241 (YIRT…NDIV).

It belongs to the protein prenyltransferase subunit alpha family. As to quaternary structure, heterodimer of an alpha and a beta subunit.

It carries out the reaction geranylgeranyl diphosphate + L-cysteinyl-[protein] = S-geranylgeranyl-L-cysteinyl-[protein] + diphosphate. Its function is as follows. Catalyzes the transfer of a geranyl-geranyl moiety from geranyl-geranyl pyrophosphate to proteins having the C-terminal -XCC or -XCXC, where both cysteines may become modified. Acts on YPT1 and SEC4. The polypeptide is Geranylgeranyl transferase type-2 subunit alpha (BET4) (Saccharomyces cerevisiae (strain ATCC 204508 / S288c) (Baker's yeast)).